Reading from the N-terminus, the 117-residue chain is Probable non-functional immunoglobulin heavy variable 3-16 (117 aa).

An N-terminal signal peptide occupies residues 1-19 (MEFGLSWVFLAGILKGVQC). Residues 20 to 44 (EVQLVESGGGLVQPGGSLRLSCAAS) form a framework-1 region. Residues 21-117 (VQLVESGGGL…EDMAVYYCVR (97 aa)) form the Ig-like domain. Cysteine 41 and cysteine 115 are joined by a disulfide. The segment at 45–52 (GFTFSNSD) is complementarity-determining-1. Positions 53-69 (MNWARKAPGKGLEWVSG) are framework-2. The tract at residues 70–77 (VSWNGSRT) is complementarity-determining-2. Residue asparagine 73 is glycosylated (N-linked (GlcNAc...) asparagine). Positions 78–115 (HYVDSVKRRFIISRDNSRNSLYLQKNRRRAEDMAVYYC) are framework-3. The interval 116-117 (VR) is complementarity-determining-3.

As to quaternary structure, immunoglobulins are composed of two identical heavy chains and two identical light chains; disulfide-linked.

The protein localises to the secreted. It is found in the cell membrane. Its function is as follows. Probable non-functional open reading frame (ORF) of V region of the variable domain of immunoglobulin heavy chains. Non-functional ORF generally cannot participate in the synthesis of a productive immunoglobulin chain due to altered V-(D)-J or switch recombination and/or splicing site (at mRNA level) and/or conserved amino acid change (protein level). Immunoglobulins, also known as antibodies, are membrane-bound or secreted glycoproteins produced by B lymphocytes. In the recognition phase of humoral immunity, the membrane-bound immunoglobulins serve as receptors which, upon binding of a specific antigen, trigger the clonal expansion and differentiation of B lymphocytes into immunoglobulins-secreting plasma cells. Secreted immunoglobulins mediate the effector phase of humoral immunity, which results in the elimination of bound antigens. The antigen binding site is formed by the variable domain of one heavy chain, together with that of its associated light chain. Thus, each immunoglobulin has two antigen binding sites with remarkable affinity for a particular antigen. The variable domains are assembled by a process called V-(D)-J rearrangement and can then be subjected to somatic hypermutations which, after exposure to antigen and selection, allow affinity maturation for a particular antigen. The protein is Probable non-functional immunoglobulin heavy variable 3-16 of Homo sapiens (Human).